We begin with the raw amino-acid sequence, 451 residues long: Phosphoglucosamine mutase (451 aa).

The active-site Phosphoserine intermediate is S102. The Mg(2+) site is built by S102, D243, D245, and D247. A Phosphoserine modification is found at S102.

It belongs to the phosphohexose mutase family. The cofactor is Mg(2+). Activated by phosphorylation.

It carries out the reaction alpha-D-glucosamine 1-phosphate = D-glucosamine 6-phosphate. In terms of biological role, catalyzes the conversion of glucosamine-6-phosphate to glucosamine-1-phosphate. This chain is Phosphoglucosamine mutase, found in Paramagnetospirillum magneticum (strain ATCC 700264 / AMB-1) (Magnetospirillum magneticum).